The primary structure comprises 277 residues: Inhibition of morphological differentiation protein (277 aa).

Asp-18, Asp-20, and Asp-192 together coordinate Mg(2+).

This sequence belongs to the HAD-like hydrolase superfamily. SerB family.

The chain is Inhibition of morphological differentiation protein from Streptomyces azureus.